Here is a 313-residue protein sequence, read N- to C-terminus: tRNA-cytidine(32) 2-sulfurtransferase (313 aa).

Positions 50–55 (SGGKDS) match the PP-loop motif motif. [4Fe-4S] cluster contacts are provided by Cys-125, Cys-128, and Cys-216.

It belongs to the TtcA family. In terms of assembly, homodimer. Requires Mg(2+) as cofactor. [4Fe-4S] cluster is required as a cofactor.

The protein localises to the cytoplasm. It catalyses the reaction cytidine(32) in tRNA + S-sulfanyl-L-cysteinyl-[cysteine desulfurase] + AH2 + ATP = 2-thiocytidine(32) in tRNA + L-cysteinyl-[cysteine desulfurase] + A + AMP + diphosphate + H(+). It functions in the pathway tRNA modification. Functionally, catalyzes the ATP-dependent 2-thiolation of cytidine in position 32 of tRNA, to form 2-thiocytidine (s(2)C32). The sulfur atoms are provided by the cysteine/cysteine desulfurase (IscS) system. The chain is tRNA-cytidine(32) 2-sulfurtransferase from Haemophilus influenzae (strain ATCC 51907 / DSM 11121 / KW20 / Rd).